We begin with the raw amino-acid sequence, 466 residues long: MITLYNTLTRQKEPFEPLEPGKVKMYVCGPTVYNYIHIGNARPAINYDVVRRYFEYKGYDVNYVSNFTDVDDKLIKRSKELNESVPEIADRYIQAFYEDTGALNVKKATSNPRVMNHMDDIIEFIKDLVDKGYAYESGGDVYFRTRKFEGYGKLSHQSIDDLKVGARIESGEQKEDALDFTLWKKAKPGEISWDSPFGKGRPGWHIECSVMAYNELGETIDIHAGGSDLQFPHHENEIAQSEAHNHAPFANYWMHNGFINIDNEKMSKSLGNFVLVHDIIKEVDPDVLRFFMISVHYRSPINYNMELVESAKSGLERIRNSYQAIEEREAIATDIEDQSEYIEQIDQLLAQFEKVMDDDFNTANAITTWYDLAKLANKYVLENTTSKKVIERFKEVFQIFSDVLGIPLKGKQQDELLDEDIEALIEERNEARKNKDFARADEIRDQLKAQNIILEDTAQGVRFKRG.

Cys28 is a Zn(2+) binding site. Residues 30-40 (PTVYNYIHIGN) carry the 'HIGH' region motif. Residues Cys208, His233, and Glu237 each contribute to the Zn(2+) site. The 'KMSKS' region signature appears at 265 to 269 (KMSKS). ATP is bound at residue Lys268.

The protein belongs to the class-I aminoacyl-tRNA synthetase family. As to quaternary structure, monomer. The cofactor is Zn(2+).

The protein localises to the cytoplasm. The enzyme catalyses tRNA(Cys) + L-cysteine + ATP = L-cysteinyl-tRNA(Cys) + AMP + diphosphate. The chain is Cysteine--tRNA ligase from Staphylococcus carnosus (strain TM300).